The primary structure comprises 275 residues: TATA-box-binding protein (275 aa).

Disordered regions lie at residues 23 to 45 and 73 to 92; these read EDES…FGMN and GSMS…HTPA. Tandem repeats lie at residues 103–179 and 193–270.

The protein belongs to the TBP family. Belongs to the TFIID complex together with the TBP-associated factors (TAFs). Binds DNA as monomer.

The protein localises to the nucleus. In terms of biological role, general transcription factor that functions at the core of the DNA-binding multiprotein factor TFIID. Binding of TFIID to the TATA box is the initial transcriptional step of the pre-initiation complex (PIC), playing a role in the activation of eukaryotic genes transcribed by RNA polymerase II. This chain is TATA-box-binding protein, found in Artemia franciscana (Brine shrimp).